The primary structure comprises 188 residues: Elongation factor P (188 aa).

Belongs to the elongation factor P family.

The protein resides in the cytoplasm. The protein operates within protein biosynthesis; polypeptide chain elongation. Involved in peptide bond synthesis. Stimulates efficient translation and peptide-bond synthesis on native or reconstituted 70S ribosomes in vitro. Probably functions indirectly by altering the affinity of the ribosome for aminoacyl-tRNA, thus increasing their reactivity as acceptors for peptidyl transferase. In Rhodopseudomonas palustris (strain TIE-1), this protein is Elongation factor P.